A 546-amino-acid chain; its full sequence is Cyclic GMP-AMP synthase-like receptor (546 aa).

Polar residues predominate over residues 1 to 10 (MPVGSRQNRV). Disordered stretches follow at residues 1–116 (MPVG…CASR) and 134–186 (AKQE…RLTN). Positions 35-45 (YTERKERKDVQ) are enriched in basic and acidic residues. Residues 69–80 (TSRTLRQTSQSR) are compositionally biased toward low complexity. 2 stretches are compositionally biased toward basic and acidic residues: residues 82–95 (EVLE…DCKK) and 145–174 (KEGY…DKAT). Residues 175–186 (SHSTKGSFRLTN) are compositionally biased toward polar residues. Residues Ser243 and 255-257 (EFD) contribute to the ATP site. Positions 255, 257, and 374 each coordinate Mg(2+). GTP-binding positions include Asp374 and 428-435 (RTSFSLAE). ATP-binding positions include 432–435 (SLAE), Lys455, and 470–474 (SYHLK).

This sequence belongs to the mab-21 family. Mg(2+) is required as a cofactor. Mn(2+) serves as cofactor.

It carries out the reaction GTP + ATP = 2',3'-cGAMP + 2 diphosphate. It catalyses the reaction GTP + ATP = pppGp(2'-5')A + diphosphate. The enzyme catalyses pppGp(2'-5')A = 2',3'-cGAMP + diphosphate. In terms of biological role, nucleotidyltransferase that catalyzes the formation of cyclic GMP-AMP (2',3'-cGAMP) from ATP and GTP and plays a key role in innate immunity. Directly binds some unknown ligand, activating the nucleotidyltransferase activity, leading to synthesis of 2',3'-cGAMP, a second messenger that binds to and activates Sting, thereby triggering the immune response via activation of the NF-kappa-B transcription factor. The sequence is that of Cyclic GMP-AMP synthase-like receptor from Exaiptasia diaphana (Tropical sea anemone).